The primary structure comprises 375 residues: MVKNNKRKRVVIAMSGGVDSSVAAALLKEEGHEVIGISMQVWDYTRFTAEEGEKFDTCCSLDDIHDARRVAEQLEIPFYVVNFEEEFQNLVIDDFVNEYLLGRTPNPCVRCNQWIKFELLLKKARGLGADMIATGHYARTEQDADGRYRLMKGVDPAKDQSYFLFTLTQEQLAMTLFPLGGMTKQEVRALAAGYGLRVAEKGESQEICFVPDNDYVRFIEEERGKQLLSGNIVDRKGKVLGVHDGTYRYTVGQRKGLGIAHPEPLYVLGVDAARKEVTVGPRDALYSDGLIATAINWIAPTPETAIEASCKIRYRHHPIPCRILPLADNRAEVRFTEREKSVTPGQAVVFYDGDTVLGGGWIEHAVNTKTAVSHE.

Residues 13–20 and Met39 contribute to the ATP site; that span reads AMSGGVDS. Cys111 serves as the catalytic Nucleophile. Cys111 and Cys208 are disulfide-bonded. Residue Gly135 coordinates ATP. The interaction with tRNA stretch occupies residues 158 to 160; that stretch reads KDQ. Cys208 serves as the catalytic Cysteine persulfide intermediate. Residues 313-314 form an interaction with tRNA region; sequence RY.

Belongs to the MnmA/TRMU family.

It is found in the cytoplasm. The catalysed reaction is S-sulfanyl-L-cysteinyl-[protein] + uridine(34) in tRNA + AH2 + ATP = 2-thiouridine(34) in tRNA + L-cysteinyl-[protein] + A + AMP + diphosphate + H(+). Functionally, catalyzes the 2-thiolation of uridine at the wobble position (U34) of tRNA, leading to the formation of s(2)U34. The polypeptide is tRNA-specific 2-thiouridylase MnmA (Geotalea uraniireducens (strain Rf4) (Geobacter uraniireducens)).